The following is a 155-amino-acid chain: Transcription antitermination protein NusB (155 aa).

Belongs to the NusB family.

In terms of biological role, involved in transcription antitermination. Required for transcription of ribosomal RNA (rRNA) genes. Binds specifically to the boxA antiterminator sequence of the ribosomal RNA (rrn) operons. The chain is Transcription antitermination protein NusB from Vibrio parahaemolyticus serotype O3:K6 (strain RIMD 2210633).